Reading from the N-terminus, the 165-residue chain is Crossover junction endodeoxyribonuclease RuvC (165 aa).

Active-site residues include Asp7, Glu68, and His142. The Mg(2+) site is built by Asp7, Glu68, and His142.

Belongs to the RuvC family. As to quaternary structure, homodimer which binds Holliday junction (HJ) DNA. The HJ becomes 2-fold symmetrical on binding to RuvC with unstacked arms; it has a different conformation from HJ DNA in complex with RuvA. In the full resolvosome a probable DNA-RuvA(4)-RuvB(12)-RuvC(2) complex forms which resolves the HJ. Mg(2+) serves as cofactor.

It localises to the cytoplasm. The enzyme catalyses Endonucleolytic cleavage at a junction such as a reciprocal single-stranded crossover between two homologous DNA duplexes (Holliday junction).. Its function is as follows. The RuvA-RuvB-RuvC complex processes Holliday junction (HJ) DNA during genetic recombination and DNA repair. Endonuclease that resolves HJ intermediates. Cleaves cruciform DNA by making single-stranded nicks across the HJ at symmetrical positions within the homologous arms, yielding a 5'-phosphate and a 3'-hydroxyl group; requires a central core of homology in the junction. The consensus cleavage sequence is 5'-(A/T)TT(C/G)-3'. Cleavage occurs on the 3'-side of the TT dinucleotide at the point of strand exchange. HJ branch migration catalyzed by RuvA-RuvB allows RuvC to scan DNA until it finds its consensus sequence, where it cleaves and resolves the cruciform DNA. This chain is Crossover junction endodeoxyribonuclease RuvC, found in Anaplasma marginale (strain St. Maries).